The chain runs to 189 residues: Elongation factor P (189 aa).

N6-(3,6-diaminohexanoyl)-5-hydroxylysine is present on lysine 34.

It belongs to the elongation factor P family. May be beta-lysylated on the epsilon-amino group of Lys-34 by the combined action of EpmA and EpmB, and then hydroxylated on the C5 position of the same residue by EpmC (if this protein is present). Lysylation is critical for the stimulatory effect of EF-P on peptide-bond formation. The lysylation moiety may extend toward the peptidyltransferase center and stabilize the terminal 3-CCA end of the tRNA. Hydroxylation of the C5 position on Lys-34 may allow additional potential stabilizing hydrogen-bond interactions with the P-tRNA.

It is found in the cytoplasm. It participates in protein biosynthesis; polypeptide chain elongation. Its function is as follows. Involved in peptide bond synthesis. Alleviates ribosome stalling that occurs when 3 or more consecutive Pro residues or the sequence PPG is present in a protein, possibly by augmenting the peptidyl transferase activity of the ribosome. Modification of Lys-34 is required for alleviation. This is Elongation factor P from Legionella pneumophila (strain Paris).